The primary structure comprises 410 residues: Cysteine desulfurase IscS (410 aa).

Residues 80-81, asparagine 160, glutamine 188, and 208-210 contribute to the pyridoxal 5'-phosphate site; these read AT and SGH. Lysine 211 carries the N6-(pyridoxal phosphate)lysine modification. A pyridoxal 5'-phosphate-binding site is contributed by threonine 248. Catalysis depends on cysteine 334, which acts as the Cysteine persulfide intermediate. Position 334 (cysteine 334) interacts with [2Fe-2S] cluster.

This sequence belongs to the class-V pyridoxal-phosphate-dependent aminotransferase family. NifS/IscS subfamily. In terms of assembly, homodimer. Forms a heterotetramer with IscU, interacts with other sulfur acceptors. Requires pyridoxal 5'-phosphate as cofactor.

The protein localises to the cytoplasm. It catalyses the reaction (sulfur carrier)-H + L-cysteine = (sulfur carrier)-SH + L-alanine. The protein operates within cofactor biosynthesis; iron-sulfur cluster biosynthesis. Master enzyme that delivers sulfur to a number of partners involved in Fe-S cluster assembly, tRNA modification or cofactor biosynthesis. Catalyzes the removal of elemental sulfur atoms from cysteine to produce alanine. Functions as a sulfur delivery protein for Fe-S cluster synthesis onto IscU, an Fe-S scaffold assembly protein, as well as other S acceptor proteins. This chain is Cysteine desulfurase IscS, found in Rickettsia prowazekii (strain Madrid E).